The chain runs to 356 residues: Stomatin-like protein 2, mitochondrial (356 aa).

The transit peptide at 1-28 (MLARAARGTGALLLRGSLLASGRAPRRA) directs the protein to the mitochondrion. Position 17 is a phosphoserine; by PKC/PRKCZ (S17). Phosphotyrosine is present on Y124. Residue K145 is modified to N6-acetyllysine; alternate. Residue K145 is modified to N6-succinyllysine; alternate. Positions 215-252 (INVAEGKKQAQILASEAEKAEQINQAAGEASAVLAKAK) form a coiled coil. K233 bears the N6-acetyllysine mark. The interval 321–356 (KAPVPGTPDSLSSGSSRDVQGTDASLDEELDRVKMS) is disordered. Residue T327 is modified to Phosphothreonine. Over residues 329-343 (DSLSSGSSRDVQGTD) the composition is skewed to polar residues. S330 carries the phosphoserine modification.

This sequence belongs to the band 7/mec-2 family. In terms of assembly, forms homooligomers. Interacts with MFN2; may form heterooligomers. Interacts with CACNA2D2. Interacts with PHB1 and PHB2; recruits them to cardiolipin-enriched mitochondrial membranes and stabilizes them. Post-translationally, hyperphosphorylated at Ser-17 in some patients with monoclonal gammopathy of undetermined significance (MGUS), multiple myeloma (MM) and Waldenstrom macroglobulinemia due to impaired dephosphorylation by PP2A. As to expression, ubiquitously expressed at low levels. Expressed in lymphoid tissues (at protein level).

Its subcellular location is the cell membrane. It is found in the mitochondrion. The protein resides in the mitochondrion inner membrane. It localises to the mitochondrion intermembrane space. The protein localises to the membrane raft. Its subcellular location is the cytoplasm. It is found in the cytoskeleton. Mitochondrial protein that probably regulates the biogenesis and the activity of mitochondria. Stimulates cardiolipin biosynthesis, binds cardiolipin-enriched membranes where it recruits and stabilizes some proteins including prohibitin and may therefore act in the organization of functional microdomains in mitochondrial membranes. Through regulation of the mitochondrial function may play a role into several biological processes including cell migration, cell proliferation, T-cell activation, calcium homeostasis and cellular response to stress. May play a role in calcium homeostasis through negative regulation of calcium efflux from mitochondria. Required for mitochondrial hyperfusion a pro-survival cellular response to stress which results in increased ATP production by mitochondria. May also regulate the organization of functional domains at the plasma membrane and play a role in T-cell activation through association with the T-cell receptor signaling complex and its regulation. The sequence is that of Stomatin-like protein 2, mitochondrial (STOML2) from Homo sapiens (Human).